Here is a 161-residue protein sequence, read N- to C-terminus: Crossover junction endodeoxyribonuclease RuvC (161 aa).

Catalysis depends on residues Asp-7, Glu-67, and Asp-140. 3 residues coordinate Mg(2+): Asp-7, Glu-67, and Asp-140.

This sequence belongs to the RuvC family. In terms of assembly, homodimer which binds Holliday junction (HJ) DNA. The HJ becomes 2-fold symmetrical on binding to RuvC with unstacked arms; it has a different conformation from HJ DNA in complex with RuvA. In the full resolvosome a probable DNA-RuvA(4)-RuvB(12)-RuvC(2) complex forms which resolves the HJ. Mg(2+) is required as a cofactor.

It localises to the cytoplasm. It carries out the reaction Endonucleolytic cleavage at a junction such as a reciprocal single-stranded crossover between two homologous DNA duplexes (Holliday junction).. Functionally, the RuvA-RuvB-RuvC complex processes Holliday junction (HJ) DNA during genetic recombination and DNA repair. Endonuclease that resolves HJ intermediates. Cleaves cruciform DNA by making single-stranded nicks across the HJ at symmetrical positions within the homologous arms, yielding a 5'-phosphate and a 3'-hydroxyl group; requires a central core of homology in the junction. The consensus cleavage sequence is 5'-(A/T)TT(C/G)-3'. Cleavage occurs on the 3'-side of the TT dinucleotide at the point of strand exchange. HJ branch migration catalyzed by RuvA-RuvB allows RuvC to scan DNA until it finds its consensus sequence, where it cleaves and resolves the cruciform DNA. The sequence is that of Crossover junction endodeoxyribonuclease RuvC from Natranaerobius thermophilus (strain ATCC BAA-1301 / DSM 18059 / JW/NM-WN-LF).